The chain runs to 747 residues: Histone-lysine N-methyltransferase EZH1 (747 aa).

A disordered region spans residues 188 to 231 (DEEEEGHNDTSDGKQDDSKEDLPVTRKRKRHAIEGNKKSSKKQF). The segment covering 194-211 (HNDTSDGKQDDSKEDLPV) has biased composition (basic and acidic residues). Residue Lys327 forms a Glycyl lysine isopeptide (Lys-Gly) (interchain with G-Cter in SUMO2) linkage. The disordered stretch occupies residues 378–421 (SAVAETKEGDSDRDTGNDWASSSSEANSRCQTPTKQKASPAPPQ). A compositionally biased stretch (basic and acidic residues) spans 382-393 (ETKEGDSDRDTG). A compositionally biased stretch (polar residues) spans 395–414 (DWASSSSEANSRCQTPTKQK). A Nuclear localization signal motif is present at residues 491–496 (QKKKRK). Residues 504 to 606 (CRKIQLKKDN…CKVVSCKNCS (103 aa)) enclose the CXC domain. The SET domain occupies 613-728 (KHLLLAPSDV…AGEELFLDYR (116 aa)).

This sequence belongs to the class V-like SAM-binding methyltransferase superfamily. Histone-lysine methyltransferase family. EZ subfamily. In terms of assembly, component of the PRC2/EED-EZH1 complex, which includes EED, EZH1, SUZ12, RBBP4 and AEBP2. The PRC2/EED-EZH1 is less abundant than the PRC2/EED-EZH2 complex, has weak methyltransferase activity and compacts chromatin in the absence of the methyltransferase cofactor S-adenosyl-L-methionine (SAM). Interacts with EZHIP; the interaction blocks EZH1 methyltransferase activity.

The protein resides in the nucleus. It carries out the reaction L-lysyl(27)-[histone H3] + 3 S-adenosyl-L-methionine = N(6),N(6),N(6)-trimethyl-L-lysyl(27)-[histone H3] + 3 S-adenosyl-L-homocysteine + 3 H(+). Its function is as follows. Polycomb group (PcG) protein. Catalytic subunit of the PRC2/EED-EZH1 complex, which methylates 'Lys-27' of histone H3, leading to transcriptional repression of the affected target gene. Able to mono-, di- and trimethylate 'Lys-27' of histone H3 to form H3K27me1, H3K27me2 and H3K27me3, respectively. Required for embryonic stem cell derivation and self-renewal, suggesting that it is involved in safeguarding embryonic stem cell identity. Compared to EZH2-containing complexes, it is less abundant in embryonic stem cells, has weak methyltransferase activity and plays a less critical role in forming H3K27me3, which is required for embryonic stem cell identity and proper differentiation. The chain is Histone-lysine N-methyltransferase EZH1 (EZH1) from Pongo abelii (Sumatran orangutan).